A 304-amino-acid polypeptide reads, in one-letter code: C-type lectin domain-containing protein 141 (304 aa).

The N-terminal stretch at 1 to 19 (MRSSSTLLIAFGLFLASMS) is a signal peptide. The interval 29–100 (GSGGHRPPSS…TTPEPTTTKV (72 aa)) is disordered. A compositionally biased stretch (low complexity) spans 51–99 (TKPPKSTSTPSTSTSTPTTTTTTTTTTTTTPTTTTTTTTTTTPEPTTTK).

In Caenorhabditis elegans, this protein is C-type lectin domain-containing protein 141 (clec-141).